We begin with the raw amino-acid sequence, 490 residues long: Adenylyltransferase and sulfurtransferase uba4 (490 aa).

The disordered stretch occupies residues 33–54 (EAAKTPPYSDSTETDRGSSSST). ATP contacts are provided by residues G96, D117, 124–128 (SNLHR), K141, and 185–186 (DH). The Zn(2+) site is built by C234 and C237. The Glycyl thioester intermediate; for adenylyltransferase activity role is filled by C251. Zn(2+) contacts are provided by C323 and C326. The 110-residue stretch at 379–488 (EHGKPVLLDV…WKREVDSTLP (110 aa)) folds into the Rhodanese domain. The active-site Cysteine persulfide intermediate; for sulfurtransferase activity is the C443.

It in the N-terminal section; belongs to the HesA/MoeB/ThiF family. UBA4 subfamily. Zn(2+) serves as cofactor.

Its subcellular location is the cytoplasm. It is found in the cytosol. It catalyses the reaction [molybdopterin-synthase sulfur-carrier protein]-C-terminal Gly-Gly + ATP + H(+) = [molybdopterin-synthase sulfur-carrier protein]-C-terminal Gly-Gly-AMP + diphosphate. It carries out the reaction [molybdopterin-synthase sulfur-carrier protein]-C-terminal Gly-Gly-AMP + S-sulfanyl-L-cysteinyl-[cysteine desulfurase] + AH2 = [molybdopterin-synthase sulfur-carrier protein]-C-terminal-Gly-aminoethanethioate + L-cysteinyl-[cysteine desulfurase] + A + AMP + 2 H(+). The protein operates within tRNA modification; 5-methoxycarbonylmethyl-2-thiouridine-tRNA biosynthesis. Functionally, plays a central role in 2-thiolation of mcm(5)S(2)U at tRNA wobble positions of cytosolic tRNA(Lys), tRNA(Glu) and tRNA(Gln). Also essential during biosynthesis of the molybdenum cofactor. Acts by mediating the C-terminal thiocarboxylation of sulfur carriers URM1 and MOCS2A. Its N-terminus first activates urm1 and MOCS2A as acyl-adenylates (-COAMP), then the persulfide sulfur on the catalytic cysteine is transferred to URM1 and MOCS2A to form thiocarboxylation (-COSH) of their C-terminus. The reaction probably involves hydrogen sulfide that is generated from the persulfide intermediate and that acts as a nucleophile towards URM1 and MOCS2A. Subsequently, a transient disulfide bond is formed. Does not use thiosulfate as sulfur donor; NFS1 probably acting as a sulfur donor for thiocarboxylation reactions. This chain is Adenylyltransferase and sulfurtransferase uba4, found in Pyricularia oryzae (strain 70-15 / ATCC MYA-4617 / FGSC 8958) (Rice blast fungus).